The sequence spans 375 residues: Chaperone protein DnaJ (375 aa).

The region spanning 5–70 (DYYEVLGVNR…RKRASYDQFG (66 aa)) is the J domain. Residues 133 to 211 (GLSRTIKVPT…CHGQGRQQQT (79 aa)) form a CR-type zinc finger. Zn(2+) is bound by residues C146, C149, C163, C166, C185, C188, C199, and C202. CXXCXGXG motif repeat units follow at residues 146 to 153 (CKTCNGSG), 163 to 170 (CPRCNGSG), 185 to 192 (CSVCRGRG), and 199 to 206 (CTDCHGQG).

Belongs to the DnaJ family. As to quaternary structure, homodimer. The cofactor is Zn(2+).

The protein localises to the cytoplasm. Its function is as follows. Participates actively in the response to hyperosmotic and heat shock by preventing the aggregation of stress-denatured proteins and by disaggregating proteins, also in an autonomous, DnaK-independent fashion. Unfolded proteins bind initially to DnaJ; upon interaction with the DnaJ-bound protein, DnaK hydrolyzes its bound ATP, resulting in the formation of a stable complex. GrpE releases ADP from DnaK; ATP binding to DnaK triggers the release of the substrate protein, thus completing the reaction cycle. Several rounds of ATP-dependent interactions between DnaJ, DnaK and GrpE are required for fully efficient folding. Also involved, together with DnaK and GrpE, in the DNA replication of plasmids through activation of initiation proteins. The sequence is that of Chaperone protein DnaJ from Coxiella burnetii (strain CbuK_Q154) (Coxiella burnetii (strain Q154)).